The following is a 76-amino-acid chain: MISKNQLARINELSKKSKETGLSDAEKTEQKQLREEYLKAFRSSMKNTLKTVKIVDPEGNDVTPEKLKRERDQNLH.

Disordered stretches follow at residues 1–31 and 56–76; these read MISK…TEQK and DPEG…QNLH. Composition is skewed to basic and acidic residues over residues 12-31 and 63-76; these read ELSK…TEQK and TPEK…QNLH.

Belongs to the UPF0291 family.

Its subcellular location is the cytoplasm. The polypeptide is UPF0291 protein BPUM_1689 (Bacillus pumilus (strain SAFR-032)).